We begin with the raw amino-acid sequence, 1055 residues long: MDS1 and EVI1 complex locus protein EVI1-A (1055 aa).

3 consecutive C2H2-type zinc fingers follow at residues 21 to 48 (YRCE…VTPH), 75 to 97 (HECK…LLSH), and 103 to 125 (YKCD…QMSH). The C2H2-type 4; degenerate zinc-finger motif lies at 131-155 (YECENCSKQVFTDPSNLQRHIRSQH). C2H2-type zinc fingers lie at residues 161–183 (HACS…KHIH) and 189–211 (FVCE…KRMH). The segment at 218 to 240 (IKCKDCGQMFSTTSSLNKHRRFC) adopts a C2H2-type 7; atypical zinc-finger fold. 3 disordered regions span residues 324 to 345 (PVKG…VNQP), 372 to 423 (FITE…SDKD), and 531 to 621 (VPLK…PELP). Residues 332-345 (EQSSKSQSPHVNQP) show a composition bias toward polar residues. Basic and acidic residues predominate over residues 381–392 (RPHEKISDHSES). Over residues 399–413 (STPSGSDLETTSGSD) the composition is skewed to polar residues. The short motif at 422-435 (KDKLKENGKLYKDK) is the Nuclear localization signal element. Residues 531–566 (VPLKIEPESPKETKKVQKGKTESPFDLTTKRKEEKA) are compositionally biased toward basic and acidic residues. The CTBP-binding motif 1 motif lies at 554–558 (PFDLT). Residues 569 to 583 (NVPSKSGAPTSSNHD) are compositionally biased toward polar residues. A CTBP-binding motif 2 motif is present at residues 585–589 (PLDLS). A compositionally biased stretch (polar residues) spans 591 to 601 (GSRSRAATTKQ). The span at 602 to 621 (TEPRKNHIFNEKKDMDPELP) shows a compositional bias: basic and acidic residues. C2H2-type zinc fingers lie at residues 734-756 (YTCR…LRTH), 762-785 (YRCK…RNIH), and 791-813 (FKCH…LKKH). 2 disordered regions span residues 813 to 837 (HENG…GPIL) and 922 to 957 (SVDE…EDFK). The segment covering 816–827 (GNLSGTAASSPH) has biased composition (polar residues). Over residues 944-954 (DDEDDDDDEEE) the composition is skewed to acidic residues.

As to quaternary structure, homooligomer. Interacts with ctbp. Expressed dynamically during embryonic development; in the developing pronephros, specific areas of the brain (forebrain, midbrain and hindbrain), and in the majority of the visceral arch, and head mesenchyme derived from neural crest cells. Within the pronephros, expressed in the ventroposterior region of the pronephros anlagen from stage 20 (and is absent from the splanchnic layer that forms the glomus), then expression becomes restricted to the distal tubule and duct by the tadpole stage. In adults, expressed in various tissues including kidney, lung, testis, spleen and stomach.

It is found in the nucleus. It localises to the nucleus speckle. Transcriptional repressor during pronephros development. Plays a role in regionalization of the pronephros; may promote formation of the distal tubule and duct over formation of the glomus and proximal tubule. This is MDS1 and EVI1 complex locus protein EVI1-A (mecom-a) from Xenopus laevis (African clawed frog).